We begin with the raw amino-acid sequence, 385 residues long: Leucine aminopeptidase 1 (385 aa).

A signal peptide spans 1 to 19 (MKFPSFLSLGIAASTTALA). Residues 20-87 (ALPDQKPIGD…FPRAFAKTAV (68 aa)) constitute a propeptide that is removed on maturation. Residue asparagine 177 is glycosylated (N-linked (GlcNAc...) asparagine). 2 residues coordinate Zn(2+): histidine 185 and aspartate 204. Asparagine 229 carries an N-linked (GlcNAc...) asparagine glycan. Zn(2+) is bound by residues glutamate 243 and aspartate 270. An intrachain disulfide couples cysteine 319 to cysteine 323. Histidine 352 provides a ligand contact to Zn(2+).

Belongs to the peptidase M28 family. M28E subfamily. In terms of assembly, monomer. The cofactor is Zn(2+).

It is found in the secreted. Its function is as follows. Extracellular aminopeptidase that allows assimilation of proteinaceous substrates. The polypeptide is Leucine aminopeptidase 1 (LAP1) (Ajellomyces dermatitidis (strain ER-3 / ATCC MYA-2586) (Blastomyces dermatitidis)).